We begin with the raw amino-acid sequence, 341 residues long: HTH-type transcriptional repressor PurR (341 aa).

An HTH lacI-type domain is found at 2 to 56 (ATIKDVAKRANVSTTTVSHVINKTRFVAEETRNAVWAAIKELHYSPSAVARSLKV). Positions 4–23 (IKDVAKRANVSTTTVSHVIN) form a DNA-binding region, H-T-H motif. A DNA-binding region spans residues 48 to 56 (SAVARSLKV). Hypoxanthine-binding residues include tyrosine 73, arginine 190, threonine 192, phenylalanine 221, and aspartate 275.

As to quaternary structure, homodimer.

The protein operates within purine metabolism; purine nucleotide biosynthesis [regulation]. Is the main repressor of the genes involved in the de novo synthesis of purine nucleotides, regulating purB, purC, purEK, purF, purHD, purL, purMN and guaBA expression. PurR is allosterically activated to bind its cognate DNA by binding the purine corepressors, hypoxanthine or guanine, thereby effecting transcription repression. The sequence is that of HTH-type transcriptional repressor PurR from Escherichia coli (strain UTI89 / UPEC).